Consider the following 916-residue polypeptide: Nitrate reductase [NADH] 1 (916 aa).

Residues 1 to 77 are disordered; sequence MAASVQPRQF…DDEEEEQEDW (77 aa). A compositionally biased stretch (acidic residues) spans 66 to 76; it reads GSDDEEEEQED. C192 serves as a coordination point for Mo-molybdopterin. The Cytochrome b5 heme-binding domain maps to 541 to 616; it reads GKQFTMSEVR…LDTYRIGELI (76 aa). Residues H576 and H599 each contribute to the heme site. The 113-residue stretch at 656–768 folds into the FAD-binding FR-type domain; sequence RDKVPCQLVD…KGPLGHVEYT (113 aa). Residues 708–711, 725–729, F730, F737, 742–744, S792, and T795 each bind FAD; these read RAYT, LIKVY, and LMT.

The protein belongs to the nitrate reductase family. As to quaternary structure, homodimer. The cofactor is FAD. Heme is required as a cofactor. It depends on Mo-molybdopterin as a cofactor.

It carries out the reaction nitrite + NAD(+) + H2O = nitrate + NADH + H(+). Its function is as follows. Nitrate reductase is a key enzyme involved in the first step of nitrate assimilation in plants, fungi and bacteria. This Oryza sativa subsp. japonica (Rice) protein is Nitrate reductase [NADH] 1 (NIA1).